The chain runs to 578 residues: Kelch repeat-containing protein kel-10 (578 aa).

The region spanning P51 to P118 is the BTB domain. Residues I158–A236 enclose the BACK domain. Kelch repeat units follow at residues A265–D315, K316–D362, L368–N414, I416–N462, V464–T510, and S512–D558.

This Caenorhabditis elegans protein is Kelch repeat-containing protein kel-10.